The chain runs to 451 residues: C4-dicarboxylate transport protein (451 aa).

The next 9 helical transmembrane spans lie at 17–37 (SLYV…HFYP), 53–73 (LIKM…IAGM), 85–105 (LALL…LIVV), 153–173 (AFAK…GFAL), 193–213 (VLFT…FGAM), 231–251 (LMGS…GLIA), 306–326 (GYSF…VFIA), 339–359 (ITLL…TGSG), and 361–381 (IVLA…LALI).

Belongs to the dicarboxylate/amino acid:cation symporter (DAACS) (TC 2.A.23) family.

It is found in the cell inner membrane. Functionally, responsible for the transport of dicarboxylates such as succinate, fumarate, and malate from the periplasm across the membrane. This Paracidovorax citrulli (strain AAC00-1) (Acidovorax citrulli) protein is C4-dicarboxylate transport protein.